Here is a 393-residue protein sequence, read N- to C-terminus: Chorismate synthase (393 aa).

NADP(+) contacts are provided by Arg-39 and Arg-45. Residues 133–135, 256–257, Gly-301, 316–320, and Arg-342 contribute to the FMN site; these read RSS, NA, and KPIPT.

Belongs to the chorismate synthase family. Homotetramer. FMNH2 serves as cofactor.

The enzyme catalyses 5-O-(1-carboxyvinyl)-3-phosphoshikimate = chorismate + phosphate. It participates in metabolic intermediate biosynthesis; chorismate biosynthesis; chorismate from D-erythrose 4-phosphate and phosphoenolpyruvate: step 7/7. Its function is as follows. Catalyzes the anti-1,4-elimination of the C-3 phosphate and the C-6 proR hydrogen from 5-enolpyruvylshikimate-3-phosphate (EPSP) to yield chorismate, which is the branch point compound that serves as the starting substrate for the three terminal pathways of aromatic amino acid biosynthesis. This reaction introduces a second double bond into the aromatic ring system. This Lysinibacillus sphaericus (strain C3-41) protein is Chorismate synthase.